The following is a 450-amino-acid chain: tRNA modification GTPase MnmE (450 aa).

(6S)-5-formyl-5,6,7,8-tetrahydrofolate contacts are provided by arginine 23, glutamate 80, and arginine 123. The TrmE-type G domain maps to 219–372 (GLHVVLAGKP…LRQRLLQLAG (154 aa)). Asparagine 229 lines the K(+) pocket. GTP-binding positions include 229–234 (NVGKSS), 248–254 (TPIAGTT), 273–276 (DTAG), and 353–355 (SAR). Mg(2+) is bound at residue serine 233. 3 residues coordinate K(+): threonine 248, isoleucine 250, and threonine 253. Threonine 254 serves as a coordination point for Mg(2+). Lysine 450 contacts (6S)-5-formyl-5,6,7,8-tetrahydrofolate.

Belongs to the TRAFAC class TrmE-Era-EngA-EngB-Septin-like GTPase superfamily. TrmE GTPase family. Homodimer. Heterotetramer of two MnmE and two MnmG subunits. K(+) is required as a cofactor.

It is found in the cytoplasm. Functionally, exhibits a very high intrinsic GTPase hydrolysis rate. Involved in the addition of a carboxymethylaminomethyl (cmnm) group at the wobble position (U34) of certain tRNAs, forming tRNA-cmnm(5)s(2)U34. The chain is tRNA modification GTPase MnmE from Bordetella bronchiseptica (strain ATCC BAA-588 / NCTC 13252 / RB50) (Alcaligenes bronchisepticus).